Consider the following 1388-residue polypeptide: Putative ATP-dependent RNA helicase DHX57 (1388 aa).

Residues 1-11 (MSSSVRRKGKP) are compositionally biased toward basic residues. Disordered regions lie at residues 1-107 (MSSS…MTSE) and 121-154 (EQGA…AGQE). Over residues 34–51 (HGGGGGGGGSCGGGGGGS) the composition is skewed to gly residues. The segment covering 79–89 (DSNKSKGETRP) has biased composition (basic and acidic residues). Ser-128 and Ser-133 each carry phosphoserine. The region spanning 175–220 (PVPECAVSPLAVQKLSRYGFHTEHCQLALRICDGDLGAALEHLLRQ) is the UBA domain. Residues 299-326 (DTSPETCKFYLKGNCKFGSKCKFKHEVP) form a C3H1-type zinc finger. At Ser-475 the chain carries Phosphoserine. A Helicase ATP-binding domain is found at 555–722 (LKLLSKHQVV…FSYCPVITIP (168 aa)). ATP is bound at residue 568–575 (GMTGCGKT). Positions 669–672 (DEVH) match the DEVH box motif. Positions 832 to 1012 (LIEALLEWIV…QLCLRIKILE (181 aa)) constitute a Helicase C-terminal domain.

It belongs to the DEAD box helicase family. DEAH subfamily.

It catalyses the reaction ATP + H2O = ADP + phosphate + H(+). Functionally, probable ATP-binding RNA helicase. This is Putative ATP-dependent RNA helicase DHX57 (Dhx57) from Mus musculus (Mouse).